The sequence spans 217 residues: Methylthioribulose-1-phosphate dehydratase (217 aa).

The Zn(2+) site is built by His-106 and His-108.

Belongs to the aldolase class II family. MtnB subfamily. It depends on Zn(2+) as a cofactor.

It carries out the reaction 5-(methylsulfanyl)-D-ribulose 1-phosphate = 5-methylsulfanyl-2,3-dioxopentyl phosphate + H2O. The protein operates within amino-acid biosynthesis; L-methionine biosynthesis via salvage pathway; L-methionine from S-methyl-5-thio-alpha-D-ribose 1-phosphate: step 2/6. Functionally, catalyzes the dehydration of methylthioribulose-1-phosphate (MTRu-1-P) into 2,3-diketo-5-methylthiopentyl-1-phosphate (DK-MTP-1-P). This chain is Methylthioribulose-1-phosphate dehydratase, found in Xanthomonas euvesicatoria pv. vesicatoria (strain 85-10) (Xanthomonas campestris pv. vesicatoria).